Consider the following 508-residue polypeptide: Asparagine--tRNA ligase (508 aa).

Belongs to the class-II aminoacyl-tRNA synthetase family. Homodimer.

Its subcellular location is the cytoplasm. It catalyses the reaction tRNA(Asn) + L-asparagine + ATP = L-asparaginyl-tRNA(Asn) + AMP + diphosphate + H(+). This is Asparagine--tRNA ligase from Streptococcus suis (strain 05ZYH33).